A 638-amino-acid polypeptide reads, in one-letter code: UvrABC system protein C (638 aa).

The GIY-YIG domain maps to 20–97 (ECAGVYQMFD…IKKFQPKFNI (78 aa)). One can recognise a UVR domain in the interval 209-244 (KELQENLSKKMEELSSHMYFEEAAEIRDRIKALSYV).

It belongs to the UvrC family. Interacts with UvrB in an incision complex.

The protein resides in the cytoplasm. Its function is as follows. The UvrABC repair system catalyzes the recognition and processing of DNA lesions. UvrC both incises the 5' and 3' sides of the lesion. The N-terminal half is responsible for the 3' incision and the C-terminal half is responsible for the 5' incision. The chain is UvrABC system protein C from Rickettsia canadensis (strain McKiel).